The primary structure comprises 118 residues: Galanin peptides (118 aa).

Positions methionine 1–threonine 19 are cleaved as a signal peptide. Positions glutamate 20–glutamate 30 are excised as a propeptide. Alanine amide is present on alanine 61.

Belongs to the galanin family. As to expression, strongly expressed in brain and stomach, moderately in the eye, and very weakly in heart, kidney and gills. Not detected in liver.

It is found in the secreted. In terms of biological role, endocrine hormone of the central and peripheral nervous systems that binds and activates the G protein-coupled receptors GALR1 (galr1a and galr1b) and GALR2 (galr2a and galr2b). This small neuropeptide may regulate diverse physiologic functions including contraction of smooth muscle of the gastrointestinal and genitourinary tract, growth hormone and insulin release and adrenal secretion. The sequence is that of Galanin peptides from Danio rerio (Zebrafish).